A 197-amino-acid polypeptide reads, in one-letter code: UPF0215 protein MK0057 (197 aa).

Belongs to the UPF0215 family.

The protein is UPF0215 protein MK0057 of Methanopyrus kandleri (strain AV19 / DSM 6324 / JCM 9639 / NBRC 100938).